Consider the following 235-residue polypeptide: Carboxy-S-adenosyl-L-methionine synthase (235 aa).

S-adenosyl-L-methionine is bound by residues Tyr35, 60 to 62 (GCS), 83 to 84 (DN), Asn124, and Arg191.

Belongs to the class I-like SAM-binding methyltransferase superfamily. Cx-SAM synthase family. Homodimer.

It catalyses the reaction prephenate + S-adenosyl-L-methionine = carboxy-S-adenosyl-L-methionine + 3-phenylpyruvate + H2O. Functionally, catalyzes the conversion of S-adenosyl-L-methionine (SAM) to carboxy-S-adenosyl-L-methionine (Cx-SAM). The sequence is that of Carboxy-S-adenosyl-L-methionine synthase from Campylobacter jejuni subsp. jejuni serotype O:2 (strain ATCC 700819 / NCTC 11168).